The sequence spans 335 residues: Ketol-acid reductoisomerase (NADP(+)) (335 aa).

One can recognise a KARI N-terminal Rossmann domain in the interval valine 2 to threonine 182. NADP(+) contacts are provided by residues tyrosine 25–glutamine 28, arginine 48, serine 51, and aspartate 83–glutamine 86. Histidine 108 is a catalytic residue. Glycine 134 provides a ligand contact to NADP(+). Positions threonine 183 to leucine 328 constitute a KARI C-terminal knotted domain. Positions 191, 195, 227, and 231 each coordinate Mg(2+). Serine 252 contacts substrate.

Belongs to the ketol-acid reductoisomerase family. It depends on Mg(2+) as a cofactor.

The enzyme catalyses (2R)-2,3-dihydroxy-3-methylbutanoate + NADP(+) = (2S)-2-acetolactate + NADPH + H(+). It carries out the reaction (2R,3R)-2,3-dihydroxy-3-methylpentanoate + NADP(+) = (S)-2-ethyl-2-hydroxy-3-oxobutanoate + NADPH + H(+). Its pathway is amino-acid biosynthesis; L-isoleucine biosynthesis; L-isoleucine from 2-oxobutanoate: step 2/4. It participates in amino-acid biosynthesis; L-valine biosynthesis; L-valine from pyruvate: step 2/4. In terms of biological role, involved in the biosynthesis of branched-chain amino acids (BCAA). Catalyzes an alkyl-migration followed by a ketol-acid reduction of (S)-2-acetolactate (S2AL) to yield (R)-2,3-dihydroxy-isovalerate. In the isomerase reaction, S2AL is rearranged via a Mg-dependent methyl migration to produce 3-hydroxy-3-methyl-2-ketobutyrate (HMKB). In the reductase reaction, this 2-ketoacid undergoes a metal-dependent reduction by NADPH to yield (R)-2,3-dihydroxy-isovalerate. The chain is Ketol-acid reductoisomerase (NADP(+)) from Methanococcoides burtonii (strain DSM 6242 / NBRC 107633 / OCM 468 / ACE-M).